The primary structure comprises 246 residues: Aquaporin AqpM (246 aa).

The Cytoplasmic portion of the chain corresponds to 1-11; it reads MVSLTKRCIAE. The chain crosses the membrane as a helical span at residues 12 to 32; that stretch reads FIGTFILVFFGAGSAAVTLMI. The Extracellular segment spans residues 33-55; sequence ASGGTSPNPFNIGIGLLGGLGDW. A helical transmembrane segment spans residues 56–76; that stretch reads VAIGLAFGFAIAASIYALGNI. Residues 77–103 are Cytoplasmic-facing; the sequence is SGCHINPAVTIGLWSVKKFPGREVVPY. Residues 82-84 carry the NPA 1 motif; that stretch reads NPA. A helical transmembrane segment spans residues 104 to 124; it reads IIAQLLGAAFGSFIFLQCAGI. Residues 125 to 145 lie on the Extracellular side of the membrane; the sequence is GAATVGGLGATAPFPGISYWQ. Residues 146 to 166 traverse the membrane as a helical segment; the sequence is AMLAEVVGTFLLMITIMGIAV. At 167–172 the chain is on the cytoplasmic side; sequence DERAPK. Residues 173-193 form a helical membrane-spanning segment; sequence GFAGIIIGLTVAGIITTLGNI. Residues 194–217 are Extracellular-facing; it reads SGSSLNPARTFGPYLNDMIFAGTN. The NPA 2 signature appears at 199 to 201; the sequence is NPA. The chain crosses the membrane as a helical span at residues 218–238; the sequence is LWNYYPIYVIGPIVGAVLAAL. The Cytoplasmic portion of the chain corresponds to 239 to 246; it reads TYQYLTSE.

The protein belongs to the MIP/aquaporin (TC 1.A.8) family. In terms of assembly, homotetramer.

It localises to the cell membrane. Channel that permits osmotically driven movement of water in both directions. It mediates rapid entry or exit of water in response to abrupt changes in osmolarity. Also exhibits a transient but reproducible increase in the initial glycerol flux. This chain is Aquaporin AqpM (aqpM), found in Methanothermobacter marburgensis (strain ATCC BAA-927 / DSM 2133 / JCM 14651 / NBRC 100331 / OCM 82 / Marburg) (Methanobacterium thermoautotrophicum).